The sequence spans 161 residues: DNA-directed RNA polymerase 18 kDa subunit (161 aa).

This sequence belongs to the poxviridae DNA-directed RNA polymerase 18 kDa subunit family. As to quaternary structure, the DNA-dependent RNA polymerase used for intermediate and late genes expression consists of eight subunits 147 kDa, 133 kDa, 35 kDa, 30 kDa, 22 kDa, 19 kDa, 18 kDa and 7 kDa totalling more than 500 kDa in mass. The same holoenzyme, with the addition of the transcription-specificity factor RAP94, is used for early gene expression.

It localises to the virion. The catalysed reaction is RNA(n) + a ribonucleoside 5'-triphosphate = RNA(n+1) + diphosphate. Its function is as follows. Part of the DNA-dependent RNA polymerase which catalyzes the transcription of viral DNA into RNA using the four ribonucleoside triphosphates as substrates. Responsible for the transcription of early, intermediate and late genes. DNA-dependent RNA polymerase associates with the early transcription factor (ETF) thereby allowing the early genes transcription. Late transcription, and probably also intermediate transcription, require newly synthesized RNA polymerase. The polypeptide is DNA-directed RNA polymerase 18 kDa subunit (RPO18) (Vertebrata (FPV)).